The following is a 53-amino-acid chain: Large ribosomal subunit protein eL24 (53 aa).

The Zn(2+) site is built by C4, C7, C30, and C34. A C4-type zinc finger spans residues 4–34 (CSFCNKEIEEGTGKMYVKKDGSIYFFCSSKC).

The protein belongs to the eukaryotic ribosomal protein eL24 family. Part of the 50S ribosomal subunit. Forms a cluster with proteins L3 and L14. Zn(2+) serves as cofactor.

Its function is as follows. Binds to the 23S rRNA. This is Large ribosomal subunit protein eL24 from Methanobrevibacter smithii (strain ATCC 35061 / DSM 861 / OCM 144 / PS).